Reading from the N-terminus, the 190-residue chain is Prostaglandin-H2 D-isomerase (190 aa).

Residues 1-22 (MATHHTLWMGLALLGVLGDLQA) form the signal peptide. The N-linked (GlcNAc...) asparagine glycan is linked to Asn-51. Residue Cys-65 is the Nucleophile of the active site. N-linked (GlcNAc...) asparagine glycosylation occurs at Asn-78. A disulfide bond links Cys-89 and Cys-186.

The protein belongs to the calycin superfamily. Lipocalin family. Monomer.

The protein localises to the rough endoplasmic reticulum. Its subcellular location is the nucleus membrane. It is found in the golgi apparatus. The protein resides in the cytoplasm. It localises to the perinuclear region. The protein localises to the secreted. The catalysed reaction is prostaglandin H2 = prostaglandin D2. Catalyzes the conversion of PGH2 to PGD2, a prostaglandin involved in smooth muscle contraction/relaxation and a potent inhibitor of platelet aggregation. Involved in a variety of CNS functions, such as sedation, NREM sleep and PGE2-induced allodynia, and may have an anti-apoptotic role in oligodendrocytes. Binds small non-substrate lipophilic molecules, including biliverdin, bilirubin, retinal, retinoic acid and thyroid hormone, and may act as a scavenger for harmful hydrophobic molecules and as a secretory retinoid and thyroid hormone transporter. Possibly involved in development and maintenance of the blood-brain, blood-retina, blood-aqueous humor and blood-testis barrier. It is likely to play important roles in both maturation and maintenance of the central nervous system and male reproductive system. Involved in PLA2G3-dependent maturation of mast cells. PLA2G3 is secreted by immature mast cells and acts on nearby fibroblasts upstream to PTDGS to synthesize PGD2, which in turn promotes mast cell maturation and degranulation via PTGDR. The chain is Prostaglandin-H2 D-isomerase (PTGDS) from Gorilla gorilla gorilla (Western lowland gorilla).